Here is a 285-residue protein sequence, read N- to C-terminus: MSVRYAGLLLAAVAVSAHINEVNSIVFPGSLHIDNRNGHVQRDLRSADNGNEERNAILETLSNHLASAFGYLWTKEAQEMTNSAWSALRNKESSLPLYSEGVAREYIETAALNTLTAEHRLARAEAYMVSMIVALRGVENPESLRNSADNLQQFLINVWKTGKKQPAQVFELLEHVPYEEGNASLVNDSKFAIWMAYMGKTFDHQFKNWADVQHNEQLRIEGDKEKKGGPDYVEGTESRGKKRGQTEAPDLEPGLTPKQKRLKRMELQRVKKILLNINLMGIGRS.

The signal sequence occupies residues 1–24; that stretch reads MSVRYAGLLLAAVAVSAHINEVNS. The RxLR-dEER motif lies at 42–54; the sequence is RDLRSADNGNEER. N-linked (GlcNAc...) asparagine glycans are attached at residues Asn182 and Asn187. A compositionally biased stretch (basic and acidic residues) spans 220–229; the sequence is IEGDKEKKGG. The segment at 220 to 262 is disordered; the sequence is IEGDKEKKGGPDYVEGTESRGKKRGQTEAPDLEPGLTPKQKRL. The short motif at 239–264 is the Bipartite nuclear localization signal element; the sequence is RGKKRGQTEAPDLEPGLTPKQKRLKR.

The protein belongs to the RxLR effector family. In terms of assembly, interacts with host RCD1 and SRO1 transcription co-regulators.

The protein resides in the secreted. The protein localises to the host nucleus. In terms of biological role, secreted effector that suppresses pathogen-associated molecular pattern (PAMP)-triggered immunity (PTI) in host plants. Binds to RCD1 and SRO1 transcription co-regulators to attenuate transcriptional activation of salicylic acid (SA)-induced defense genes and alters plant growth responses to light. Suppresses SA signal transduction but not SA levels. In Hyaloperonospora arabidopsidis (strain Emoy2) (Downy mildew agent), this protein is Secreted RxLR effector protein 106.